Consider the following 377-residue polypeptide: Mucin-7 (377 aa).

An N-terminal signal peptide occupies residues 1–22; it reads MKTLPLFVCICALSACFSFSEG. Residues 70-100 form a disordered region; the sequence is CRPKLPPSPNNPPKFPNPHQPPKHPDKNSSV. Residues 73–89 are compositionally biased toward pro residues; sequence KLPPSPNNPPKFPNPHQ. N-linked (GlcNAc...) asparagine glycosylation is found at asparagine 97, asparagine 128, asparagine 135, and asparagine 146. The disordered stretch occupies residues 150–355; it reads SVATLAPVNS…QPTSAPGQNK (206 aa). 6 tandem repeats follow at residues 165-187, 188-210, 211-233, 234-256, 257-279, and 280-302. Pro residues predominate over residues 169–183; the sequence is PPTPSATTPAPPSSS. Threonine 176 is a glycosylation site (O-linked (GalNAc) threonine; by GALNT13). Serine 182 and serine 183 each carry an O-linked (GalNAc) serine; by GALNT13 glycan. A compositionally biased stretch (low complexity) spans 184 to 214; that stretch reads APPETTAAPPTPSATTQAPPSSSAPPETTAA. Residues threonine 188 and threonine 189 are each glycosylated (O-linked (GalNAc) threonine; by GALNT13). A compositionally biased stretch (pro residues) spans 215 to 229; the sequence is PPTPPATTPAPPSSS. Positions 230-283 are enriched in low complexity; the sequence is APPETTAAPPTPSATTPAPLSSSAPPETTAVPPTPSATTLDPSSASAPPETTAA. The segment covering 284 to 298 has biased composition (pro residues); it reads PPTPSATTPAPPSSP. Residues 309–329 are compositionally biased toward polar residues; that stretch reads TTPNSSPTTLAPDTSETSAAP. Residues 330–348 are compositionally biased toward low complexity; it reads THQTTTSVTTQTTTTKQPT.

Monomer. In terms of processing, N- and O-glycosylated. Contains fucose, mannose, galactose, N-acetylglucosamine and N-acetylgalactosamine. In terms of tissue distribution, expressed in salivary gland tissues and only in those that contain mucous acinar cells (e.g. sublingual and submandibular glands) and not in salivary glands containing only serous acinar cells (e.g. parotid gland).

Its subcellular location is the secreted. May function in a protective capacity by promoting the clearance of bacteria in the oral cavity and aiding in mastication, speech, and swallowing. Binds P.aeruginosa pili. The protein is Mucin-7 (MUC7) of Homo sapiens (Human).